Reading from the N-terminus, the 2429-residue chain is Highly reducing polyketide synthase acrA (2429 aa).

The region spanning 4–436 is the Ketosynthase family 3 (KS3) domain; it reads PEPIAIVGMG…GTNAHAIIES (433 aa). Active-site for beta-ketoacyl synthase activity residues include cysteine 177, histidine 314, and histidine 356. The malonyl-CoA:ACP transacylase (MAT) domain stretch occupies residues 541–861; that stretch reads VFTGQGAQWP…PYSGTLSRGQ (321 aa). An N-terminal hotdog fold region spans residues 931-1068; it reads HPLLGVRSTE…GTVRVVLGPA (138 aa). Residues 931 to 1229 are dehydratase (DH) domain; sequence HPLLGVRSTE…RCSSLTPPGP (299 aa). Residues 931–1230 form the PKS/mFAS DH domain; the sequence is HPLLGVRSTE…CSSLTPPGPR (300 aa). Residue histidine 963 is the Proton acceptor; for dehydratase activity of the active site. The tract at residues 1082 to 1230 is C-terminal hotdog fold; it reads VFHEVKTERF…CSSLTPPGPR (149 aa). The Proton donor; for dehydratase activity role is filled by aspartate 1141. Residues 1388–1577 are methyltransferase (MT) domain; that stretch reads NGYMGRVAGQ…VNDFVDESKY (190 aa). A ketoreductase (KR) domain region spans residues 2065-2235; that stretch reads TYLLVGCTGG…ARGLAASVFH (171 aa). Residues 2351-2428 enclose the Carrier domain; the sequence is EVDGVIQEAF…ELCREAASEV (78 aa). At serine 2388 the chain carries O-(pantetheine 4'-phosphoryl)serine.

The protein operates within secondary metabolite biosynthesis. Highly reducing polyketide synthase; part of the cluster that mediates the biosynthesis of acurin A, a highly reduced polyketide coupled to a serine via a peptide bond. The activities of the highly reducing polyketide synthase acrA and the nonribosomal peptide synthetase acrB are collectively responsible for the synthesis of the acurin A core structure with a heptaketide backbone produced by acrA covalently fused to a L-serine by acrB. After the formation of the PK-NRP hybrid product, it is detached from acrB by reductive release to set up the formation of the lactam ring by aldol condensation. The hydrolyase acrC then catalyzes water loss to generate a double bond in the ring. This double bond is probably reduced, which is followed by three oxidations at C-22 to generate the carboxylic acid moiety, involving probably the FAD-binding monooxygenase acrE and the cytochrome P450 monooxygenases acrD and acrF. Finally, a last methylation step performed by the O-methyltransferase acrG leads to the production of acurin A. This chain is Highly reducing polyketide synthase acrA, found in Aspergillus aculeatus (strain ATCC 16872 / CBS 172.66 / WB 5094).